We begin with the raw amino-acid sequence, 509 residues long: Ethanolamine-phosphate phospho-lyase (509 aa).

Lysine 279 is modified (N6-(pyridoxal phosphate)lysine). Over residues 451-474 the composition is skewed to basic and acidic residues; it reads EKTSAKRKVHNENSGDTNAKEKET. The segment at 451–509 is disordered; that stretch reads EKTSAKRKVHNENSGDTNAKEKETCSSNSQERNPNDHAYRQSNGLHPESPTFTRKRIRT.

The protein belongs to the class-III pyridoxal-phosphate-dependent aminotransferase family. In terms of assembly, homotetramer. It depends on pyridoxal 5'-phosphate as a cofactor.

The protein resides in the mitochondrion. The enzyme catalyses phosphoethanolamine + H2O = acetaldehyde + NH4(+) + phosphate. Functionally, catalyzes the pyridoxal-phosphate-dependent breakdown of phosphoethanolamine, converting it to ammonia, inorganic phosphate and acetaldehyde. The protein is Ethanolamine-phosphate phospho-lyase (etnppl) of Xenopus laevis (African clawed frog).